Reading from the N-terminus, the 93-residue chain is Bombyxin-related peptide B (93 aa).

Residues 1–21 form the signal peptide; that stretch reads MKFVLVLVSLALLVSLASVQG. 3 disulfides stabilise this stretch: Cys-25-Cys-80, Cys-37-Cys-93, and Cys-79-Cys-84. The propeptide at 47-71 is c peptide like; that stretch reads SGAMGAAAMYGTRGWRWAAMGGNRG.

This sequence belongs to the insulin family. In terms of assembly, heterodimer of a B chain and an A chain linked by two disulfide bonds. In terms of tissue distribution, located in 4 pairs of medial neurosecretory cells in the brain.

It is found in the secreted. This chain is Bombyxin-related peptide B, found in Agrius convolvuli (Convolvulus hawk-moth).